Consider the following 447-residue polypeptide: Tubulin beta chain (447 aa).

8 residues coordinate GTP: Q11, E69, S138, G142, T143, G144, N204, and N226. E69 contributes to the Mg(2+) binding site. The interval 425 to 447 is disordered; that stretch reads YQEASISEGEEEYDEEAPLEAEE. Residues 432–447 are compositionally biased toward acidic residues; sequence EGEEEYDEEAPLEAEE.

It belongs to the tubulin family. Dimer of alpha and beta chains. A typical microtubule is a hollow water-filled tube with an outer diameter of 25 nm and an inner diameter of 15 nM. Alpha-beta heterodimers associate head-to-tail to form protofilaments running lengthwise along the microtubule wall with the beta-tubulin subunit facing the microtubule plus end conferring a structural polarity. Microtubules usually have 13 protofilaments but different protofilament numbers can be found in some organisms and specialized cells. Mg(2+) serves as cofactor.

It localises to the cytoplasm. The protein localises to the cytoskeleton. In terms of biological role, tubulin is the major constituent of microtubules, a cylinder consisting of laterally associated linear protofilaments composed of alpha- and beta-tubulin heterodimers. Microtubules grow by the addition of GTP-tubulin dimers to the microtubule end, where a stabilizing cap forms. Below the cap, tubulin dimers are in GDP-bound state, owing to GTPase activity of alpha-tubulin. This is Tubulin beta chain (tubB) from Phaeosphaeria nodorum (strain SN15 / ATCC MYA-4574 / FGSC 10173) (Glume blotch fungus).